The sequence spans 113 residues: N(2)-fixation sustaining protein CowN (113 aa).

This sequence belongs to the CowN family.

Functionally, is required to sustain N(2)-dependent growth in the presence of low levels of carbon monoxide (CO). Probably acts by protecting the N(2) fixation ability of the nitrogenase complex, which is inactivated in the presence of CO. This is N(2)-fixation sustaining protein CowN from Wolinella succinogenes (strain ATCC 29543 / DSM 1740 / CCUG 13145 / JCM 31913 / LMG 7466 / NCTC 11488 / FDC 602W) (Vibrio succinogenes).